Reading from the N-terminus, the 79-residue chain is MAEFKEQVLDILEEVCENDIVKENLDVQLFEEGILDSFAVVSLLVEFQERLDIEVSISDFDRDEWATPNMVIKKLEEIR.

Residues 2 to 79 (AEFKEQVLDI…MVIKKLEEIR (78 aa)) form the Carrier domain. Serine 37 bears the O-(pantetheine 4'-phosphoryl)serine mark.

This sequence belongs to the DltC family. 4'-phosphopantetheine is transferred from CoA to a specific serine of apo-DCP.

The protein localises to the cytoplasm. The protein operates within cell wall biogenesis; lipoteichoic acid biosynthesis. Functionally, carrier protein involved in the D-alanylation of lipoteichoic acid (LTA). The loading of thioester-linked D-alanine onto DltC is catalyzed by D-alanine--D-alanyl carrier protein ligase DltA. The DltC-carried D-alanyl group is further transferred to cell membrane phosphatidylglycerol (PG) by forming an ester bond, probably catalyzed by DltD. D-alanylation of LTA plays an important role in modulating the properties of the cell wall in Gram-positive bacteria, influencing the net charge of the cell wall. The protein is D-alanyl carrier protein of Bacillus anthracis (strain CDC 684 / NRRL 3495).